The sequence spans 306 residues: Homoserine kinase (306 aa).

An ATP-binding site is contributed by 90-100 (PLARGLGSSAS).

Belongs to the GHMP kinase family. Homoserine kinase subfamily.

The protein resides in the cytoplasm. It carries out the reaction L-homoserine + ATP = O-phospho-L-homoserine + ADP + H(+). It functions in the pathway amino-acid biosynthesis; L-threonine biosynthesis; L-threonine from L-aspartate: step 4/5. Its function is as follows. Catalyzes the ATP-dependent phosphorylation of L-homoserine to L-homoserine phosphate. This is Homoserine kinase from Staphylococcus epidermidis (strain ATCC 12228 / FDA PCI 1200).